The following is a 335-amino-acid chain: Zinc finger protein CO3 (335 aa).

Residues Cys-15, Cys-18, Cys-38, and His-43 each coordinate Zn(2+). The B box-type; atypical zinc finger occupies 15–57 (CDSCRSAPCAFYCLADSAALCATCDADVHSVNPLARRHRRVPM). The interval 141 to 179 (AGEKEDASSSKDCSSSHGKSSEGSHEFAVPGEPVPERQG) is disordered. Residues 268–310 (REARVHRYREKRKTRRFEKTIRYASRKAYAETRPRIKGRFAKR) form the CCT domain.

It belongs to the CONSTANS family.

The protein localises to the nucleus. Its function is as follows. Probable transcription factor involved in the regulation of flowering time under short day (SD) conditions. Functions as a repressor of flowering under SD conditions, independently of HD1, EHD1, MADS50 and MADS51. Controls flowering time under SD conditions by negatively regulating the expression of HD3A and FTL. The protein is Zinc finger protein CO3 of Oryza sativa subsp. japonica (Rice).